Reading from the N-terminus, the 464-residue chain is NADH dehydrogenase [ubiquinone] flavoprotein 1, mitochondrial (464 aa).

A mitochondrion-targeting transit peptide spans 1–20 (MLAARHFLGGLVPVRVSVRF). An N6-acetyllysine; alternate modification is found at K81. K81 is subject to N6-succinyllysine; alternate. Position 87–96 (87–96 (GRGGAGFPTG)) interacts with NADH. Position 104 is an N6-acetyllysine (K104). An FMN-binding site is contributed by 199–247 (RGAGAYICGEETALIESIEGKQGKPRLKPPFPADVGVFGCPTTVANVET). R257 is modified (omega-N-methylarginine). Residue K375 is modified to N6-acetyllysine. [4Fe-4S] cluster is bound by residues C379, C382, C385, and C425.

It belongs to the complex I 51 kDa subunit family. As to quaternary structure, core subunit of respiratory chain NADH dehydrogenase (Complex I) which is composed of 45 different subunits. This is a component of the flavoprotein-sulfur (FP) fragment of the enzyme. Interacts with RAB5IF. Requires FMN as cofactor. [4Fe-4S] cluster serves as cofactor.

The protein resides in the mitochondrion inner membrane. The enzyme catalyses a ubiquinone + NADH + 5 H(+)(in) = a ubiquinol + NAD(+) + 4 H(+)(out). Functionally, core subunit of the mitochondrial membrane respiratory chain NADH dehydrogenase (Complex I) which catalyzes electron transfer from NADH through the respiratory chain, using ubiquinone as an electron acceptor. Part of the peripheral arm of the enzyme, where the electrons from NADH are accepted by flavin mononucleotide (FMN) and then passed along a chain of iron-sulfur clusters by electron tunnelling to the final acceptor ubiquinone. Contains FMN, which is the initial electron acceptor as well as one iron-sulfur cluster. This Mus musculus (Mouse) protein is NADH dehydrogenase [ubiquinone] flavoprotein 1, mitochondrial.